Consider the following 763-residue polypeptide: DNA-binding protein SATB1 (763 aa).

The segment covering 1–15 (MDHLNEATQGKEHSE) has biased composition (basic and acidic residues). The interval 1-54 (MDHLNEATQGKEHSEMSNNVSDPKGPPAKIARLEQNGSPLGRGRLGSTGAKMQG) is disordered. Residues 20 to 40 (VSDPKGPPAKIARLEQNGSPL) carry the Nuclear localization signal motif. A Glycyl lysine isopeptide (Lys-Gly) (interchain with G-Cter in SUMO2) cross-link involves residue K51. The 102-residue stretch at 71 to 172 (GTMLPVFCVV…VVTLKIQLHS (102 aa)) folds into the CMP domain. K136 is modified (N6-acetyllysine). Residues 139–143 (PVPLS) carry the Protein interaction motif. In terms of domain architecture, CUTL spans 175–248 (KLEDLPPEQW…WYKHFKKTKD (74 aa)). At S185 the chain carries Phosphoserine. The nuclear matrix targeting sequence (NMTS) stretch occupies residues 224–278 (YYANVSAAKCQEFGRWYKHFKKTKDMMVEMDSLSELSQQGANHVNFGQQPVPGNT). Over residues 266–296 (HVNFGQQPVPGNTAEQPPSPAQLSHGSQPSV) the composition is skewed to polar residues. The tract at residues 266 to 307 (HVNFGQQPVPGNTAEQPPSPAQLSHGSQPSVRTPLPNLHPGL) is disordered. DNA-binding regions (CUT) lie at residues 361-448 (LEQQ…QDER) and 484-571 (NGKP…EQES). DNA-binding positions include Q390, 400-410 (RTQGLLSEILR), and N425. A compositionally biased stretch (low complexity) spans 591–607 (QIQQQQQQQQQQQQQQQ). The disordered stretch occupies residues 591 to 649 (QIQQQQQQQQQQQQQQQAPPPPQPQQQPQTGPRLPPRQPTVASPAESDEENRQKTRPRT). S637 is modified (phosphoserine). Residues 645-704 (TRPRTKISVEALGILQSFIQDVGLYPDEEAIQTLSAQLDLPKYTIIKFFQNQRYYLKHHG) constitute a DNA-binding region (homeobox). K744 participates in a covalent cross-link: Glycyl lysine isopeptide (Lys-Gly) (interchain with G-Cter in SUMO).

It belongs to the CUT homeobox family. Interacts with CUX1 (via DNA-binding domains); the interaction inhibits the attachment of both proteins to DNA. Homodimer. Part of the nuclear protein complex gamma-globin promoter and enhancer binding factor (gamma-PE) composed at least of SATB1 and HOXB2. Interaction with CtBP1 when not acetylated stabilizes attachment to DNA and promotes transcription repression. Interacts with PCAF. Interacts with sumoylated PML and HDAC1 via the CMP domain. Interacts also with DYNLT3 and POLR2J2. Binds to EP300. In terms of assembly, (Microbial infection) Interacts (via the CMP domain) with HIV-1 Tat. Post-translationally, sumoylated. Sumoylation promotes cleavage by caspases. In terms of processing, phosphorylated by PKC. Acetylated by PCAF. Phosphorylated form interacts with HDAC1, but unphosphorylated form interacts with PCAF. DNA binding properties are activated by phosphorylation and inactivated by acetylation. In opposition, gene expression is down-regulated by phosphorylation but up-regulated by acetylation. Cleaved at Asp-254 by caspase-3 and caspase-6 during T-cell apoptosis in thymus and during B-cell stimulation. The cleaved forms cannot dimerize and lose transcription regulation function because of impaired DNA and chromatin association. Expressed predominantly in thymus.

The protein resides in the nucleus matrix. Its subcellular location is the nucleus. It is found in the PML body. Functionally, crucial silencing factor contributing to the initiation of X inactivation mediated by Xist RNA that occurs during embryogenesis and in lymphoma. Binds to DNA at special AT-rich sequences, the consensus SATB1-binding sequence (CSBS), at nuclear matrix- or scaffold-associated regions. Thought to recognize the sugar-phosphate structure of double-stranded DNA. Transcriptional repressor controlling nuclear and viral gene expression in a phosphorylated and acetylated status-dependent manner, by binding to matrix attachment regions (MARs) of DNA and inducing a local chromatin-loop remodeling. Acts as a docking site for several chromatin remodeling enzymes (e.g. PML at the MHC-I locus) and also by recruiting corepressors (HDACs) or coactivators (HATs) directly to promoters and enhancers. Modulates genes that are essential in the maturation of the immune T-cell CD8SP from thymocytes. Required for the switching of fetal globin species, and beta- and gamma-globin genes regulation during erythroid differentiation. Plays a role in chromatin organization and nuclear architecture during apoptosis. Interacts with the unique region (UR) of cytomegalovirus (CMV). Alu-like motifs and SATB1-binding sites provide a unique chromatin context which seems preferentially targeted by the HIV-1 integration machinery. Moreover, HIV-1 Tat may overcome SATB1-mediated repression of IL2 and IL2RA (interleukin) in T-cells by binding to the same domain than HDAC1. Delineates specific epigenetic modifications at target gene loci, directly up-regulating metastasis-associated genes while down-regulating tumor-suppressor genes. Reprograms chromatin organization and the transcription profiles of breast tumors to promote growth and metastasis. Promotes neuronal differentiation of neural stem/progenitor cells in the adult subventricular zone, possibly by positively regulating the expression of NEUROD1. The sequence is that of DNA-binding protein SATB1 from Homo sapiens (Human).